A 257-amino-acid chain; its full sequence is Imidazole glycerol phosphate synthase subunit HisF (257 aa).

Catalysis depends on residues D12 and D131.

This sequence belongs to the HisA/HisF family. As to quaternary structure, heterodimer of HisH and HisF.

It is found in the cytoplasm. It carries out the reaction 5-[(5-phospho-1-deoxy-D-ribulos-1-ylimino)methylamino]-1-(5-phospho-beta-D-ribosyl)imidazole-4-carboxamide + L-glutamine = D-erythro-1-(imidazol-4-yl)glycerol 3-phosphate + 5-amino-1-(5-phospho-beta-D-ribosyl)imidazole-4-carboxamide + L-glutamate + H(+). The protein operates within amino-acid biosynthesis; L-histidine biosynthesis; L-histidine from 5-phospho-alpha-D-ribose 1-diphosphate: step 5/9. Functionally, IGPS catalyzes the conversion of PRFAR and glutamine to IGP, AICAR and glutamate. The HisF subunit catalyzes the cyclization activity that produces IGP and AICAR from PRFAR using the ammonia provided by the HisH subunit. The polypeptide is Imidazole glycerol phosphate synthase subunit HisF (Paraburkholderia phytofirmans (strain DSM 17436 / LMG 22146 / PsJN) (Burkholderia phytofirmans)).